The primary structure comprises 673 residues: DNA ligase (673 aa).

Residue 34–38 (DAAFD) participates in NAD(+) binding. Positions 54–73 (LRRPDSPTQRVGGATAPDFA) are disordered. NAD(+) is bound by residues 83-84 (SL) and Glu114. Lys116 (N6-AMP-lysine intermediate) is an active-site residue. 4 residues coordinate NAD(+): Arg137, Glu176, Lys292, and Lys316. 4 residues coordinate Zn(2+): Cys410, Cys413, Cys428, and Cys433. Residues 594–673 (PAEGPLAGMT…DEFCERYLQG (80 aa)) enclose the BRCT domain.

The protein belongs to the NAD-dependent DNA ligase family. LigA subfamily. The cofactor is Mg(2+). Mn(2+) serves as cofactor.

The catalysed reaction is NAD(+) + (deoxyribonucleotide)n-3'-hydroxyl + 5'-phospho-(deoxyribonucleotide)m = (deoxyribonucleotide)n+m + AMP + beta-nicotinamide D-nucleotide.. DNA ligase that catalyzes the formation of phosphodiester linkages between 5'-phosphoryl and 3'-hydroxyl groups in double-stranded DNA using NAD as a coenzyme and as the energy source for the reaction. It is essential for DNA replication and repair of damaged DNA. The sequence is that of DNA ligase from Symbiobacterium thermophilum (strain DSM 24528 / JCM 14929 / IAM 14863 / T).